Reading from the N-terminus, the 341-residue chain is Biotin synthase (341 aa).

The 225-residue stretch at 40 to 264 folds into the Radical SAM core domain; the sequence is NSVKLNYLVN…VAPRSELRIA (225 aa). Residues Cys55, Cys59, and Cys62 each coordinate [4Fe-4S] cluster. Residues Cys99, Cys132, Cys192, and Arg262 each contribute to the [2Fe-2S] cluster site. The tract at residues 317 to 341 is disordered; it reads ASAPQGGVEPVLRKRGAGTELQPNA.

The protein belongs to the radical SAM superfamily. Biotin synthase family. Homodimer. It depends on [4Fe-4S] cluster as a cofactor. Requires [2Fe-2S] cluster as cofactor.

It carries out the reaction (4R,5S)-dethiobiotin + (sulfur carrier)-SH + 2 reduced [2Fe-2S]-[ferredoxin] + 2 S-adenosyl-L-methionine = (sulfur carrier)-H + biotin + 2 5'-deoxyadenosine + 2 L-methionine + 2 oxidized [2Fe-2S]-[ferredoxin]. Its pathway is cofactor biosynthesis; biotin biosynthesis; biotin from 7,8-diaminononanoate: step 2/2. In terms of biological role, catalyzes the conversion of dethiobiotin (DTB) to biotin by the insertion of a sulfur atom into dethiobiotin via a radical-based mechanism. This Renibacterium salmoninarum (strain ATCC 33209 / DSM 20767 / JCM 11484 / NBRC 15589 / NCIMB 2235) protein is Biotin synthase.